An 86-amino-acid chain; its full sequence is Protein E7 (86 aa).

The tract at residues 1–37 (MHGPHPTVKDIELSLAPEDIPVCNVQLDEEDYTDAVE) is E7 terminal domain. Residues 49–85 (CTKCSLPLRLVVECSHADIRALEQLLLGTLKLVCPRC) fold into a zinc finger. A Nuclear export signal motif is present at residues 67–75 (IRALEQLLL).

The protein belongs to the papillomaviridae E7 protein family. In terms of assembly, homodimer. Homooligomer. Interacts with host RB1; this interaction induces dissociation of RB1-E2F1 complex thereby disrupting RB1 activity. Interacts with host EP300; this interaction represses EP300 transcriptional activity. Interacts with protein E2; this interaction inhibits E7 oncogenic activity. Interacts with host TMEM173/STING; this interaction impairs the ability of TMEM173/STING to sense cytosolic DNA and promote the production of type I interferon (IFN-alpha and IFN-beta). Post-translationally, highly phosphorylated.

The protein localises to the host cytoplasm. It localises to the host nucleus. In terms of biological role, plays a role in viral genome replication by driving entry of quiescent cells into the cell cycle. Stimulation of progression from G1 to S phase allows the virus to efficiently use the cellular DNA replicating machinery to achieve viral genome replication. E7 protein has both transforming and trans-activating activities. Induces the disassembly of the E2F1 transcription factor from RB1, with subsequent transcriptional activation of E2F1-regulated S-phase genes. Interferes with host histone deacetylation mediated by HDAC1 and HDAC2, leading to transcription activation. Also plays a role in the inhibition of both antiviral and antiproliferative functions of host interferon alpha. Interaction with host TMEM173/STING impairs the ability of TMEM173/STING to sense cytosolic DNA and promote the production of type I interferon (IFN-alpha and IFN-beta). In Homo sapiens (Human), this protein is Protein E7.